Reading from the N-terminus, the 865-residue chain is Fanconi-associated nuclease 1 homolog (865 aa).

A UBZ4-type zinc finger spans residues 35–62; the sequence is GKICPLCETKFSLASYKSHMNTCNVADD. Zn(2+)-binding residues include Cys38, Cys41, His53, and Cys57. 2 disordered regions span residues 90 to 140 and 162 to 187; these read DASF…SLDV and RRSS…PVKK. Basic and acidic residues-rich tracts occupy residues 93–112 and 174–187; these read FSDK…REVP and DQAD…PVKK. Residues Glu682, Asp810, Glu825, and Val826 each coordinate Mn(2+). The region spanning 744 to 857 is the VRR-NUC domain; sequence QELIEENIRK…GIRAEVCHVA (114 aa).

Belongs to the FAN1 family. It depends on Mn(2+) as a cofactor. Mg(2+) is required as a cofactor.

Its subcellular location is the nucleus. It catalyses the reaction Hydrolytically removes 5'-nucleotides successively from the 3'-hydroxy termini of 3'-hydroxy-terminated oligonucleotides.. Its function is as follows. Nuclease required for the repair of DNA interstrand cross-links (ICL). Acts as a 5'-3' exonuclease that anchors at a cut end of DNA and cleaves DNA successively at every third nucleotide, allowing to excise an ICL from one strand through flanking incisions. This is Fanconi-associated nuclease 1 homolog (fan-1) from Caenorhabditis elegans.